The chain runs to 474 residues: Tocopherol cyclase, chloroplastic (474 aa).

Residues methionine 1–arginine 65 constitute a chloroplast transit peptide.

In terms of tissue distribution, present in all green tissues, both in bundle sheath and in mesophyll cells.

It localises to the plastid. Its subcellular location is the chloroplast. The enzyme catalyses gamma-tocopherol = 2,3-dimethyl-6-phytylbenzene-1,4-diol. It functions in the pathway cofactor biosynthesis; tocopherol biosynthesis. In terms of biological role, involved in the synthesis of tocopherols (vitamin E), which presumably protect photosynthetic complexes from oxidative stress. Catalyzes the conversion of 2,3-dimethyl-5-phytyl-1,4-hydroquinone (DMPQ) to gamma-tocopherol. This chain is Tocopherol cyclase, chloroplastic, found in Zea mays (Maize).